Reading from the N-terminus, the 181-residue chain is MTGIKRPMSQYQDDNEWEDWGPSKSQLKRDAEALQKMGEEIVSLSHSELEKIPLDEELAEAVELGRKLKPKKDESFRRHLQFIGRLMRSRDVEPIVEALSIIKNRHSTVNARLHRLEQWRERLINEGDSALNELMSQFHELDRQKLRQLIRTANKERELNKPPVAYREMYQYLRGEIEDLL.

A disordered region spans residues 1-24 (MTGIKRPMSQYQDDNEWEDWGPSK).

The protein belongs to the DarP family.

The protein resides in the cytoplasm. Member of a network of 50S ribosomal subunit biogenesis factors which assembles along the 30S-50S interface, preventing incorrect 23S rRNA structures from forming. Promotes peptidyl transferase center (PTC) maturation. The sequence is that of Dual-action ribosomal maturation protein DarP from Aeromonas hydrophila subsp. hydrophila (strain ATCC 7966 / DSM 30187 / BCRC 13018 / CCUG 14551 / JCM 1027 / KCTC 2358 / NCIMB 9240 / NCTC 8049).